The sequence spans 382 residues: Alkanesulfonate monooxygenase (382 aa).

The protein belongs to the SsuD family. In terms of assembly, homotetramer.

The catalysed reaction is an alkanesulfonate + FMNH2 + O2 = an aldehyde + FMN + sulfite + H2O + 2 H(+). Catalyzes the desulfonation of aliphatic sulfonates. The sequence is that of Alkanesulfonate monooxygenase from Yersinia pseudotuberculosis serotype O:1b (strain IP 31758).